A 58-amino-acid polypeptide reads, in one-letter code: U8-ctenitoxin-Pk1a (58 aa).

5 cysteine pairs are disulfide-bonded: C2-C16, C9-C22, C15-C40, C24-C38, and C48-C55.

In terms of tissue distribution, expressed by the venom gland.

The protein localises to the secreted. Its function is as follows. No toxic effects on mice at dose levels of 5 ug per mouse. May be toxic to insects. The polypeptide is U8-ctenitoxin-Pk1a (Phoneutria keyserlingi (Brazilian wandering spider)).